A 191-amino-acid chain; its full sequence is Glycerol-3-phosphate acyltransferase (191 aa).

The next 6 helical transmembrane spans lie at 7–27, 51–71, 80–100, 115–135, 139–159, and 161–181; these read ILVL…SYIG, KLAV…VMLA, FVFM…WLSF, FIEY…FVIF, SLSS…HYSA, and ESIT…ENIV.

It belongs to the PlsY family. In terms of assembly, probably interacts with PlsX.

It localises to the cell inner membrane. The catalysed reaction is an acyl phosphate + sn-glycerol 3-phosphate = a 1-acyl-sn-glycero-3-phosphate + phosphate. Its pathway is lipid metabolism; phospholipid metabolism. Its function is as follows. Catalyzes the transfer of an acyl group from acyl-phosphate (acyl-PO(4)) to glycerol-3-phosphate (G3P) to form lysophosphatidic acid (LPA). This enzyme utilizes acyl-phosphate as fatty acyl donor, but not acyl-CoA or acyl-ACP. The sequence is that of Glycerol-3-phosphate acyltransferase from Ehrlichia canis (strain Jake).